The following is a 177-amino-acid chain: Protein-export protein SecB (177 aa).

It belongs to the SecB family. As to quaternary structure, homotetramer, a dimer of dimers. One homotetramer interacts with 1 SecA dimer.

Its subcellular location is the cytoplasm. In terms of biological role, one of the proteins required for the normal export of preproteins out of the cell cytoplasm. It is a molecular chaperone that binds to a subset of precursor proteins, maintaining them in a translocation-competent state. It also specifically binds to its receptor SecA. The chain is Protein-export protein SecB from Ehrlichia canis (strain Jake).